Here is a 293-residue protein sequence, read N- to C-terminus: 4-diphosphocytidyl-2-C-methyl-D-erythritol kinase (293 aa).

Residue Lys16 is part of the active site. Residue 99–109 participates in ATP binding; the sequence is PMGAGLGGGSS. Asp141 is a catalytic residue.

It belongs to the GHMP kinase family. IspE subfamily.

It catalyses the reaction 4-CDP-2-C-methyl-D-erythritol + ATP = 4-CDP-2-C-methyl-D-erythritol 2-phosphate + ADP + H(+). It participates in isoprenoid biosynthesis; isopentenyl diphosphate biosynthesis via DXP pathway; isopentenyl diphosphate from 1-deoxy-D-xylulose 5-phosphate: step 3/6. In terms of biological role, catalyzes the phosphorylation of the position 2 hydroxy group of 4-diphosphocytidyl-2C-methyl-D-erythritol. The polypeptide is 4-diphosphocytidyl-2-C-methyl-D-erythritol kinase (Burkholderia thailandensis (strain ATCC 700388 / DSM 13276 / CCUG 48851 / CIP 106301 / E264)).